The primary structure comprises 472 residues: Protein hedgehog (472 aa).

Residue Cys84 is the site of N-palmitoyl cysteine attachment. Ca(2+) is bound by residues Glu149, Asp154, Glu185, Asp188, and Asp190. The Cholesterol glycine ester moiety is linked to residue Gly256.

This sequence belongs to the hedgehog family. As to quaternary structure, interacts with shf. Post-translationally, the C-terminal part of the hedgehog protein precursor displays an autoproteolysis activity that results in the cleavage of the full-length protein into two parts (N-product and C-product). In addition, the C-terminal part displays a cholesterol transferase activity that results by the covalent attachment of a cholesterol moiety to the C-terminal of the newly generated N-product. The N-product is the active species in both local and long-range signaling, whereas the C-product has no signaling activity. In terms of processing, cholesterylation is required for N-product targeting to lipid rafts and multimerization. N-palmitoylation by Rasp of the hedgehog N-product, within the secretory pathway, is required for the embryonic and larval patterning activities of the hedgehog signal.

It localises to the nucleus. The protein resides in the cytoplasm. It is found in the cell membrane. The catalysed reaction is glycyl-L-cysteinyl-[protein] + cholesterol + H(+) = [protein]-C-terminal glycyl cholesterol ester + N-terminal L-cysteinyl-[protein]. Functionally, the C-terminal part of the hedgehog protein precursor displays an autoproteolysis activity that results in the cleavage of the full-length protein into two parts (N-product and C-product). In addition, the C-terminal part displays a cholesterol transferase activity that results by the covalent attachment of a cholesterol moiety to the C-terminal of the newly generated N-product. Once cleaved, the C-product has no signaling activity and diffuses from the cell. In terms of biological role, the dually lipidated hedgehog protein N-product is a morphogen which is essential for a variety of patterning events during development. Establishes the anterior-posterior axis of the embryonic segments and patterns the larval imaginal disks. Binds to the patched (ptc) receptor, which functions in association with smoothened (smo), to activate the transcription of target genes wingless (wg), decapentaplegic (dpp) and ptc. In the absence of hh, ptc represses the constitutive signaling activity of smo through fused (fu). Essential component of a signaling pathway which regulates the Duox-dependent gut immune response to bacterial uracil; required to activate Cad99C-dependent endosome formation, norpA-dependent Ca2+ mobilization and p38 MAPK, which are essential steps in the Duox-dependent production of reactive oxygen species (ROS) in response to intestinal bacterial infection. During photoreceptor differentiation, it up-regulates transcription of Ubr3, which in turn promotes the hh-signaling pathway by mediating the ubiquitination and degradation of cos. The sequence is that of Protein hedgehog from Drosophila ananassae (Fruit fly).